A 517-amino-acid polypeptide reads, in one-letter code: Ribosome assembly protein 4 (517 aa).

The interval 1–25 is disordered; sequence MATLAPPPSKRQRREEIQRTQTQQD. The ubiquitin-like (UBL) domain stretch occupies residues 34-128; sequence LGSFKANFID…TITLSAEPQA (95 aa). 8 WD repeats span residues 144–184, 187–226, 230–277, 278–316, 351–397, 402–441, 444–483, and 486–517; these read GHGQ…PKFT, GHTG…QVNQ, GHAK…HVLS, GHKG…LVHN, EERR…SKPV, GHQN…FIKN, GHVA…LAMD, and GHED…TWRN.

It belongs to the NLE1/RSA4 family. Associates with the pre-60S ribosomal particle. Interacts (via WD repeats) with uL18. Interacts (via UBL domain) with MDN1 (via VWFA/MIDAS domain). Interacts (via WD repeats) with NSA2.

The protein resides in the nucleus. It is found in the nucleolus. Involved in ribosome biogenesis. Required for processing and efficient intra-nuclear transport of pre-60S ribosomal subunits. Interacts with the AAA-ATPase Midasin, which is essential for the ATP-dependent dissociation of a group of nonribosomal factors from the pre-60S particle. The chain is Ribosome assembly protein 4 from Chaetomium thermophilum (strain DSM 1495 / CBS 144.50 / IMI 039719) (Thermochaetoides thermophila).